The primary structure comprises 273 residues: Dermonecrotic toxin SdSicTox-betaIIB1aiii (273 aa).

His4 is a catalytic residue. 2 residues coordinate Mg(2+): Glu24 and Asp26. Catalysis depends on His40, which acts as the Nucleophile. 2 disulfide bridges follow: Cys44–Cys50 and Cys46–Cys189. Residue Asp84 coordinates Mg(2+).

The protein belongs to the arthropod phospholipase D family. Class II subfamily. Mg(2+) serves as cofactor. Expressed by the venom gland.

It localises to the secreted. It catalyses the reaction an N-(acyl)-sphingosylphosphocholine = an N-(acyl)-sphingosyl-1,3-cyclic phosphate + choline. The catalysed reaction is an N-(acyl)-sphingosylphosphoethanolamine = an N-(acyl)-sphingosyl-1,3-cyclic phosphate + ethanolamine. It carries out the reaction a 1-acyl-sn-glycero-3-phosphocholine = a 1-acyl-sn-glycero-2,3-cyclic phosphate + choline. The enzyme catalyses a 1-acyl-sn-glycero-3-phosphoethanolamine = a 1-acyl-sn-glycero-2,3-cyclic phosphate + ethanolamine. Its function is as follows. Dermonecrotic toxins cleave the phosphodiester linkage between the phosphate and headgroup of certain phospholipids (sphingolipid and lysolipid substrates), forming an alcohol (often choline) and a cyclic phosphate. This toxin acts on sphingomyelin (SM). It may also act on ceramide phosphoethanolamine (CPE), lysophosphatidylcholine (LPC) and lysophosphatidylethanolamine (LPE), but not on lysophosphatidylserine (LPS), and lysophosphatidylglycerol (LPG). It acts by transphosphatidylation, releasing exclusively cyclic phosphate products as second products. Induces dermonecrosis, hemolysis, increased vascular permeability, edema, inflammatory response, and platelet aggregation. This is Dermonecrotic toxin SdSicTox-betaIIB1aiii from Sicarius cf. damarensis (strain GJB-2008) (Six-eyed sand spider).